A 341-amino-acid polypeptide reads, in one-letter code: Foldase protein PrsA (341 aa).

Positions 1 to 22 are cleaved as a signal peptide; the sequence is MKNIGRLAVTALIAVFIFSVTG. A lipid anchor (N-palmitoyl cysteine) is attached at cysteine 23. Residue cysteine 23 is the site of S-diacylglycerol cysteine attachment. The 93-residue stretch at 199–291 folds into the PpiC domain; that stretch reads PNKMHLAHIL…FGYHIIKCIK (93 aa).

It belongs to the PrsA family.

It localises to the cell membrane. The enzyme catalyses [protein]-peptidylproline (omega=180) = [protein]-peptidylproline (omega=0). Its function is as follows. Plays a major role in protein secretion by helping the post-translocational extracellular folding of several secreted proteins. The sequence is that of Foldase protein PrsA from Clostridium kluyveri (strain NBRC 12016).